A 193-amino-acid chain; its full sequence is Endoribonuclease YbeY (193 aa).

The Zn(2+) site is built by His109, His113, and His119. Residues 143 to 193 form a disordered region; it reads GAALREGRREGRAGEAKDRWTRSPTSISTPSRSGSTARGSRAKTSRAGSRT. Positions 147 to 163 are enriched in basic and acidic residues; it reads REGRREGRAGEAKDRWT. Over residues 164–181 the composition is skewed to low complexity; that stretch reads RSPTSISTPSRSGSTARG.

Belongs to the endoribonuclease YbeY family. Zn(2+) is required as a cofactor.

It is found in the cytoplasm. Its function is as follows. Single strand-specific metallo-endoribonuclease involved in late-stage 70S ribosome quality control and in maturation of the 3' terminus of the 16S rRNA. This is Endoribonuclease YbeY from Anaeromyxobacter dehalogenans (strain 2CP-C).